The following is a 150-amino-acid chain: SsrA-binding protein (150 aa).

The protein belongs to the SmpB family.

Its subcellular location is the cytoplasm. In terms of biological role, required for rescue of stalled ribosomes mediated by trans-translation. Binds to transfer-messenger RNA (tmRNA), required for stable association of tmRNA with ribosomes. tmRNA and SmpB together mimic tRNA shape, replacing the anticodon stem-loop with SmpB. tmRNA is encoded by the ssrA gene; the 2 termini fold to resemble tRNA(Ala) and it encodes a 'tag peptide', a short internal open reading frame. During trans-translation Ala-aminoacylated tmRNA acts like a tRNA, entering the A-site of stalled ribosomes, displacing the stalled mRNA. The ribosome then switches to translate the ORF on the tmRNA; the nascent peptide is terminated with the 'tag peptide' encoded by the tmRNA and targeted for degradation. The ribosome is freed to recommence translation, which seems to be the essential function of trans-translation. This is SsrA-binding protein from Rubrobacter xylanophilus (strain DSM 9941 / JCM 11954 / NBRC 16129 / PRD-1).